The following is a 434-amino-acid chain: Salicylate hydroxylase (434 aa).

9–38 (RIGIVGGGISGVALALELCRYSHIQVQLFE) is a binding site for FAD.

In terms of assembly, monomer. Requires FAD as cofactor.

It catalyses the reaction salicylate + NADH + O2 + 2 H(+) = catechol + CO2 + NAD(+) + H2O. Its pathway is aromatic compound metabolism; naphthalene degradation. The protein is Salicylate hydroxylase (nahG) of Pseudomonas putida (Arthrobacter siderocapsulatus).